Here is a 1297-residue protein sequence, read N- to C-terminus: Phosphoribosylformylglycinamidine synthase (1297 aa).

ATP contacts are provided by residues 307-318 and alanine 678; that span reads GASTGSGGEIRD. Residues glutamate 718, asparagine 722, and aspartate 886 each contribute to the Mg(2+) site. One can recognise a Glutamine amidotransferase type-1 domain in the interval 1044-1297; sequence MAILREQGVN…MFQNARKNLA (254 aa). Residue cysteine 1137 is the Nucleophile of the active site. Active-site residues include histidine 1262 and glutamate 1264.

It in the N-terminal section; belongs to the FGAMS family. Monomer.

It is found in the cytoplasm. It carries out the reaction N(2)-formyl-N(1)-(5-phospho-beta-D-ribosyl)glycinamide + L-glutamine + ATP + H2O = 2-formamido-N(1)-(5-O-phospho-beta-D-ribosyl)acetamidine + L-glutamate + ADP + phosphate + H(+). It participates in purine metabolism; IMP biosynthesis via de novo pathway; 5-amino-1-(5-phospho-D-ribosyl)imidazole from N(2)-formyl-N(1)-(5-phospho-D-ribosyl)glycinamide: step 1/2. In terms of biological role, phosphoribosylformylglycinamidine synthase involved in the purines biosynthetic pathway. Catalyzes the ATP-dependent conversion of formylglycinamide ribonucleotide (FGAR) and glutamine to yield formylglycinamidine ribonucleotide (FGAM) and glutamate. The chain is Phosphoribosylformylglycinamidine synthase from Vibrio vulnificus (strain YJ016).